The sequence spans 326 residues: MPGPTQTLSPNGENNNDIIQDNGTIIPFRKHTVRGERSYSWGMAVNVYSTSITQETMSRHDIIAWVNDIVSLNYTKVEQLCSGAAYCQFMDMLFPGCISLKKVKFQAKLEHEYIHNFKLLQASFKRMNVDKVIPVEKLVKGRFQDNLDFIQWFKKFYDANYDGKEYDPVEARQGQDAIPPPDPGEQIFNLPKKSHHANSPTAGAAKSSPAAKPGSTPSRPSSAKRASSSGSASRSDKDLETQVIQLNEQVHSLKLALEGVEKERDFYFGKLREIELLCQEHGQENDDLVQRLMEVLYASDEQEGQTEEPEVEEQTHDQQPQQQEEY.

Phosphoserine is present on Ser-9. Positions 56–158 constitute a Calponin-homology (CH) domain; it reads TMSRHDIIAW…FIQWFKKFYD (103 aa). Tyr-166 is modified (phosphotyrosine). Disordered regions lie at residues 170-239 and 297-326; these read EARQ…DKDL and YASD…QEEY. Positions 186–326 are DCTN1-binding; sequence QIFNLPKKSH…DQQPQQQEEY (141 aa). Over residues 199 to 233 the composition is skewed to low complexity; the sequence is SPTAGAAKSSPAAKPGSTPSRPSSAKRASSSGSAS. Phosphoserine occurs at positions 218 and 235. The 71-residue stretch at 235–305 folds into the EB1 C-terminal domain; sequence SDKDLETQVI…LYASDEQEGQ (71 aa). Residues 258 to 301 form an APC-binding region; that stretch reads EGVEKERDFYFGKLREIELLCQEHGQENDDLVQRLMEVLYASDE. Acidic residues predominate over residues 300–312; sequence DEQEGQTEEPEVE. Low complexity predominate over residues 317–326; the sequence is DQQPQQQEEY.

Belongs to the MAPRE family. As to quaternary structure, interacts with DCTN1. Interacts with APC (via C-terminal). Interacts with monomeric and polymerized tubulin. Interacts with SLAIN1. Interacts (via the N-terminal region) with BAG1. Interacts with ASB14. Interacts with HAX1; this interaction is essential for epidermal cell migration. Phosphorylated at Ser-235 by CK2 leading to enhanced cell adhesion. Phosphorylated by CDK1 and AURKB during mitosis reduces the binding affinity of MAPRE2 for microtubules. In terms of processing, ubiquitinated in an ASB14-dependent manner; leading to proteasomal degradation.

Its subcellular location is the cytoplasm. The protein resides in the cytoskeleton. In terms of biological role, adapter protein that is involved in microtubule polymerization, and spindle function by stabilizing microtubules and anchoring them at centrosomes. Therefore, ensures mitotic progression and genome stability. Acts as a central regulator of microtubule reorganization in apico-basal epithelial differentiation. Plays a role during oocyte meiosis by regulating microtubule dynamics. Participates in neurite growth by interacting with plexin B3/PLXNB3 and microtubule reorganization during apico-basal epithelial differentiation. Also plays an essential role for cell migration and focal adhesion dynamics. Mechanistically, recruits HAX1 to microtubules in order to regulate focal adhesion dynamics. This Rattus norvegicus (Rat) protein is Microtubule-associated protein RP/EB family member 2 (Mapre2).